Reading from the N-terminus, the 299-residue chain is Pyridoxal kinase PdxY (299 aa).

A substrate-binding site is contributed by serine 18. Positions 120 and 157 each coordinate ATP. Position 235 (aspartate 235) interacts with substrate.

The protein belongs to the pyridoxine kinase family. PdxY subfamily. Homodimer. Requires Mg(2+) as cofactor.

It carries out the reaction pyridoxal + ATP = pyridoxal 5'-phosphate + ADP + H(+). The protein operates within cofactor metabolism; pyridoxal 5'-phosphate salvage; pyridoxal 5'-phosphate from pyridoxal: step 1/1. Its function is as follows. Pyridoxal kinase involved in the salvage pathway of pyridoxal 5'-phosphate (PLP). Catalyzes the phosphorylation of pyridoxal to PLP. This is Pyridoxal kinase PdxY from Deinococcus geothermalis (strain DSM 11300 / CIP 105573 / AG-3a).